The following is a 477-amino-acid chain: Inner membrane protein YbhI (477 aa).

Over 1-5 (MNKKS) the chain is Cytoplasmic. The helical transmembrane segment at 6–26 (LWKLILILAIPCIIGFMPAPA) threads the bilayer. Residue glycine 27 is a topological domain, periplasmic. The helical transmembrane segment at 28 to 48 (LSELAWVLFGIYLAAIVGLVI) threads the bilayer. Residues 49–50 (KP) lie on the Cytoplasmic side of the membrane. Residues 51-71 (FPEPVVLLIAVAASMVVVGNL) traverse the membrane as a helical segment. Residues 72-87 (SDGAFKTTAVLSGYSS) are Periplasmic-facing. A helical transmembrane segment spans residues 88-108 (GTTWLVFSAFTLSAAFVTTGL). Residues 109–148 (GKRIAYLLIGKIGNTTLGLGYVTVFLDLVLAPATPSNTAR) are Cytoplasmic-facing. The helical transmembrane segment at 149-169 (AGGIVLPIINSVAVALGSEPE) threads the bilayer. Over 170-219 (KSPRRVGHYLMMSIYMVTKTTSYMFFTAMAGNILALKMINDILHLQISWG) the chain is Periplasmic. Residues 220–240 (GWALAAGLPGIIMLLVTPLVI) form a helical membrane-spanning segment. Residues 241–272 (YTMYPPEIKKVDNKTIAKAGLAELGPMKIREK) lie on the Cytoplasmic side of the membrane. A helical transmembrane segment spans residues 273 to 293 (MLLGVFVLALLGWIFSKSLGV). Over 294–297 (DEST) the chain is Periplasmic. The chain crosses the membrane as a helical span at residues 298–318 (VAIVVMATMLLLGIVTWEDVV). At 319-356 (KNKGGWNTLIWYGGIIGLSSLLSKVKFFEWLAEVFKNN) the chain is on the cytoplasmic side. A helical membrane pass occupies residues 357-377 (LAFDGHGNVAFFVIIFLSIIV). Position 378 (arginine 378) is a topological domain, periplasmic. The helical transmembrane segment at 379–399 (YFFASGSAYIVAMLPVFAMLA) threads the bilayer. The Cytoplasmic portion of the chain corresponds to 400 to 445 (NVSGAPLMLTALALLFSNSYGGMVTHYGGAAGPVIFGVGYNDIKSW). A helical transmembrane segment spans residues 446–466 (WLVGAVLTILTFLVHITLGVW). Residues 467–477 (WWNMLIGWNML) lie on the Periplasmic side of the membrane.

Belongs to the SLC13A/DASS transporter (TC 2.A.47) family. DIT1 subfamily.

It localises to the cell inner membrane. This chain is Inner membrane protein YbhI (ybhI), found in Escherichia coli (strain K12).